We begin with the raw amino-acid sequence, 232 residues long: LexA repressor (232 aa).

The disordered stretch occupies residues 1 to 25 (MSDDSSDSTSGAGSGRGRDSGLTER). The span at 16–25 (RGRDSGLTER) shows a compositional bias: basic and acidic residues. The segment at residues 46-66 (IREIGDAVGLTSTSSVAHQLR) is a DNA-binding region (H-T-H motif). Active-site for autocatalytic cleavage activity residues include serine 156 and lysine 193.

The protein belongs to the peptidase S24 family. In terms of assembly, homodimer.

It catalyses the reaction Hydrolysis of Ala-|-Gly bond in repressor LexA.. Functionally, represses a number of genes involved in the response to DNA damage (SOS response), including recA and lexA. In the presence of single-stranded DNA, RecA interacts with LexA causing an autocatalytic cleavage which disrupts the DNA-binding part of LexA, leading to derepression of the SOS regulon and eventually DNA repair. This is LexA repressor from Mycolicibacterium vanbaalenii (strain DSM 7251 / JCM 13017 / BCRC 16820 / KCTC 9966 / NRRL B-24157 / PYR-1) (Mycobacterium vanbaalenii).